A 180-amino-acid polypeptide reads, in one-letter code: Signal peptidase complex subunit 3 (180 aa).

Topologically, residues 1–12 (MHNLLSRANSLL) are cytoplasmic. The chain crosses the membrane as a helical; Signal-anchor for type II membrane protein span at residues 13–33 (AFTLWVMAAVTAACFLSTVFL). Over 34–180 (DYTVSNHLEV…PTTYTTTRRS (147 aa)) the chain is Lumenal. Asn141 is a glycosylation site (N-linked (GlcNAc...) asparagine).

This sequence belongs to the SPCS3 family. As to quaternary structure, component of the signal peptidase complex (SPC) composed of a catalytic subunit sec-11 and three accessory subunits spcs-1, spcs-2 and spcs-3. The complex induces a local thinning of the ER membrane which is used to measure the length of the signal peptide (SP) h-region of protein substrates. This ensures the selectivity of the complex towards h-regions shorter than 18-20 amino acids.

It localises to the endoplasmic reticulum membrane. In terms of biological role, essential component of the signal peptidase complex (SPC) which catalyzes the cleavage of N-terminal signal sequences from nascent proteins as they are translocated into the lumen of the endoplasmic reticulum. Essential for the SPC catalytic activity, possibly by stabilizing and positioning the active center of the complex close to the lumenal surface. This Caenorhabditis briggsae protein is Signal peptidase complex subunit 3.